The following is a 703-amino-acid chain: Serotransferrin (703 aa).

A signal peptide spans 1–19 (MDLSLHVALCLGMLALCLA). Transferrin-like domains follow at residues 27-341 (VRWC…ALKE) and 354-686 (VRWC…SLNK). 2 disulfides stabilise this stretch: Cys-30–Cys-65 and Cys-40–Cys-56. Positions 80 and 112 each coordinate Fe(3+). 3 cysteine pairs are disulfide-bonded: Cys-135/Cys-218, Cys-180/Cys-193, and Cys-246/Cys-260. Positions 137, 141, 143, and 144 each coordinate hydrogencarbonate. Tyr-212 contributes to the Fe(3+) binding site. His-268 is a Fe(3+) binding site. Positions 341–350 (EGVKEDDLAA) are connecting region. 2 disulfide bridges follow: Cys-357–Cys-389 and Cys-367–Cys-380. Residues Asp-404 and Tyr-443 each contribute to the Fe(3+) site. 7 disulfides stabilise this stretch: Cys-414-Cys-698, Cys-432-Cys-659, Cys-466-Cys-545, Cys-490-Cys-687, Cys-500-Cys-514, Cys-511-Cys-528, and Cys-585-Cys-599. Hydrogencarbonate-binding residues include Thr-468, Arg-472, Ala-474, and Gly-475. A Fe(3+)-binding site is contributed by Tyr-539. Fe(3+) is bound at residue His-607.

This sequence belongs to the transferrin family. In terms of assembly, monomer. Plasma.

Its subcellular location is the secreted. Its function is as follows. Transferrins are iron binding transport proteins which can bind two Fe(3+) ions in association with the binding of an anion, usually bicarbonate. It is responsible for the transport of iron from sites of absorption and heme degradation to those of storage and utilization. Serum transferrin may also have a further role in stimulating cell proliferation. In Xenopus tropicalis (Western clawed frog), this protein is Serotransferrin (tf).